The chain runs to 176 residues: MIDDDGYRPNVGIVICNRQGQVLWARRYGQHSWQFPQGGINPGESPEQAMYRELYEEVGLGRKDVRILASTRNWLRYKLPKRLVRWDTRPVCIGQKQRWFLLQLLCNEEDINVQHSNTPEFDGWRWVSYWYPVRQVVSFKRDVYRRVMKEFASVVMPMQESVSLPRSSYSYRRKRS.

The region spanning 6 to 149 is the Nudix hydrolase domain; sequence GYRPNVGIVI…KRDVYRRVMK (144 aa). Residues 38–59 carry the Nudix box motif; the sequence is GGINPGESPEQAMYRELYEEVG.

This sequence belongs to the Nudix hydrolase family. RppH subfamily. Requires a divalent metal cation as cofactor.

Functionally, accelerates the degradation of transcripts by removing pyrophosphate from the 5'-end of triphosphorylated RNA, leading to a more labile monophosphorylated state that can stimulate subsequent ribonuclease cleavage. The sequence is that of RNA pyrophosphohydrolase from Photorhabdus laumondii subsp. laumondii (strain DSM 15139 / CIP 105565 / TT01) (Photorhabdus luminescens subsp. laumondii).